We begin with the raw amino-acid sequence, 118 residues long: Myotrophin (118 aa).

Position 2 is an N-acetylcysteine (Cys-2). The stretch at Cys-2 to Arg-30 is one ANK 1 repeat. An N6-acetyllysine mark is found at Lys-4, Lys-11, and Lys-24. Residue Thr-31 is modified to Phosphothreonine. ANK repeat units lie at residues Gly-34 to Lys-66 and His-67 to Pro-99.

The protein belongs to the myotrophin family. In terms of assembly, interacts with RELA. Interacts with the heterodimer formed by CAPZA1 and CAPZB.

The protein localises to the cytoplasm. The protein resides in the nucleus. It localises to the perinuclear region. Its function is as follows. Promotes dimerization of NF-kappa-B subunits and regulates NF-kappa-B transcription factor activity. Promotes growth of cardiomyocytes, but not cardiomyocyte proliferation. Promotes cardiac muscle hypertrophy. Plays a role in the regulation of the growth of actin filaments. Inhibits the activity of the F-actin-capping protein complex formed by the CAPZA1 and CAPZB heterodimer. The protein is Myotrophin (MTPN) of Bos taurus (Bovine).